The sequence spans 170 residues: Acetyl-CoA decarbonylase/synthase complex subunit epsilon 1 (170 aa).

Belongs to the CdhB family. Heterotetramer of two alpha and two epsilon subunits. The ACDS complex is made up of alpha, epsilon, beta, gamma and delta subunits with a probable stoichiometry of (alpha(2)epsilon(2))(4)-beta(8)-(gamma(1)delta(1))(8).

Its pathway is one-carbon metabolism; methanogenesis from acetate. Its function is as follows. Part of a complex that catalyzes the reversible cleavage of acetyl-CoA, allowing growth on acetate as sole source of carbon and energy. The alpha-epsilon subcomponent functions as a carbon monoxide dehydrogenase. The precise role of the epsilon subunit is unclear; it may have a stabilizing role within the alpha(2)epsilon(2) component and/or be involved in electron transfer to FAD during a potential FAD-mediated CO oxidation. The protein is Acetyl-CoA decarbonylase/synthase complex subunit epsilon 1 (cdhB1) of Methanosarcina thermophila.